The following is a 509-amino-acid chain: Circadian clock oscillator protein KaiC (509 aa).

2 consecutive KaiC domains span residues 1–243 (MKDK…IIVF) and 257–509 (IRIS…IEKN). ATP contacts are provided by G45, T46, G47, K48, T49, S85, K220, L221, R222, T224, H226, D237, T286, G287, T288, G289, K290, and T291. T49 provides a ligand contact to Mg(2+). Residues T291 and E314 each coordinate Mg(2+). Residue W327 coordinates ATP. S427 is modified (phosphoserine; by autocatalysis). Phosphothreonine; by autocatalysis is present on T428. ATP-binding residues include R447, K453, M454, R455, S457, H459, and K461.

Belongs to the KaiC family. Homohexamer; hexamerization is dependent on ATP-binding. Component of the KaiBC complex. KaiC interacts with SasA, activating its autokinase function and leading to RpaA activation. It depends on Mg(2+) as a cofactor. Phosphorylated on serine and threonine residues by autocatalysis. Has a 4 step phosphorylation cycle; the autokinase acts first on Thr-428, then Ser-427. When Ser-427 is modified KaiC switches to an autophosphatase mode, acting first on phospho-Thr-428 then phospho-Ser-427.

The enzyme catalyses L-seryl-[protein] + ATP = O-phospho-L-seryl-[protein] + ADP + H(+). The catalysed reaction is L-threonyl-[protein] + ATP = O-phospho-L-threonyl-[protein] + ADP + H(+). It carries out the reaction ATP + H2O = ADP + phosphate + H(+). Its function is as follows. Central component of the KaiBC oscillator complex, which constitutes the main circadian regulator in cyanobacteria. Its composition changes during the circadian cycle to control KaiC phosphorylation. Autophosphorylates and has a weak ATPase activity; ATPase activity defines the circadian period. This Prochlorococcus marinus subsp. pastoris (strain CCMP1986 / NIES-2087 / MED4) protein is Circadian clock oscillator protein KaiC.